The primary structure comprises 152 residues: MKRFLLATCLVAVLLWEAGAIPAHQVPVKTKGKHVFPEQETEKAWGTRAMEPLEKDDQLRALLPVPKQKLAATEEKHSDTMTWVETKDILSRFRNPLQGPELDLDSIYHPMSEDVQNEEVPQSRPILYRQVLHGPEEDLDHISHSLEDSGEP.

Residues 1 to 20 (MKRFLLATCLVAVLLWEAGA) form the signal peptide.

In terms of assembly, interacts with MTTP. Interacts with MAD1L1. As to expression, highly expressed in the small intestine where it shows a proximal-distal graded expression.

The protein resides in the secreted. It is found in the endoplasmic reticulum. In terms of biological role, lipid-binding protein which promotes lipid absorption by facilitating MTTP-mediated lipid transfer (mainly triglycerides and phospholipids) and MTTP-mediated apoB lipoprotein assembly and secretion. Protects the gastrointestinal epithelium from irradiation-induced apoptosis. May play an important role in maintaining normal growth homeostasis in epithelial cells. Involved in p53/TP53-dependent cell survival after DNA damage. In Rattus norvegicus (Rat), this protein is Proline-rich acidic protein 1 (Prap1).